Consider the following 375-residue polypeptide: Elongation factor Tu (375 aa).

A tr-type G domain is found at lysine 10–glutamate 205. The segment at glycine 19–threonine 26 is G1. Glycine 19 to threonine 26 contributes to the GTP binding site. Position 26 (threonine 26) interacts with Mg(2+). The tract at residues glycine 60–asparagine 64 is G2. The segment at aspartate 81–glycine 84 is G3. GTP contacts are provided by residues aspartate 81–histidine 85 and asparagine 136–aspartate 139. Positions asparagine 136–aspartate 139 are G4. Residues serine 173 to phenylalanine 175 form a G5 region.

Belongs to the TRAFAC class translation factor GTPase superfamily. Classic translation factor GTPase family. EF-Tu/EF-1A subfamily. In terms of assembly, monomer.

It localises to the cytoplasm. It carries out the reaction GTP + H2O = GDP + phosphate + H(+). Its function is as follows. GTP hydrolase that promotes the GTP-dependent binding of aminoacyl-tRNA to the A-site of ribosomes during protein biosynthesis. The polypeptide is Elongation factor Tu (tuf) (Spirochaeta aurantia).